The sequence spans 463 residues: Lactaldehyde dehydrogenase (463 aa).

220–225 contributes to the NAD(+) binding site; that stretch reads GSSKVG. Residues E240 and C274 contribute to the active site.

The protein belongs to the aldehyde dehydrogenase family. Homotetramer.

It catalyses the reaction (S)-lactaldehyde + NAD(+) + H2O = (S)-lactate + NADH + 2 H(+). The protein operates within cofactor biosynthesis; coenzyme F420 biosynthesis. Involved in F420 biosynthesis through the oxidation of lactaldehyde to lactate. The substrate preference order is propionaldehyde &gt; DL-lactaldehyde, DL-glyceraldehyde &gt; crotonaldehyde &gt; glycolaldehyde &gt; acetaldehyde, acrolein &gt; formaldehyde. No activity was observed towards methylglyoxal or glyceraldehyde-3-phosphate. Has a preference for NAD over NADP. This Methanocaldococcus jannaschii (strain ATCC 43067 / DSM 2661 / JAL-1 / JCM 10045 / NBRC 100440) (Methanococcus jannaschii) protein is Lactaldehyde dehydrogenase.